The chain runs to 909 residues: MANQLDASVKDDLKTQFVTREGTYRLLTLSEYSRPNRVGYSSNQSSPQVRVSMVTLPSPAQGKLGSDVGVGTPVGGGTAGANTTTTNGSSPGASPTGAAGASTAISNGGAGGDYSHSNHNSNSAGNNTVEARLGGGISMHSMMNGGVVDQNGVATNQVLGGDRICFNFGRDLYVYSFRGAKKGTEMSKPIDKKFYKGTNPSCHDFNISSATPTGAPLLVGFTTGQIQLVSPHVGPREVRKLFNEERLIDKTKVTCLKWLPNSPHLFLAAHASGHLYLYNEELPCAATAPSYQPFKLGDGYTILTSKSKTTRNPLFKWVFSTDNCCVNEFCFSPCGSHLAVVSQDGFLRVFHYDTMELLGIARSYFGGFLCVCWSPDGKYIVVGGEDDLVTVWSLHERRVVARGQGHRSWVSVVAFDPYTTSYTNWDGGDFSDDENQMNEYSHSREARFSGDSTANGGFEGFDRNSTPVHADRNGPHSASFRSDASSAEKLMSYRLGSVSQDTQICLWDITEDVLRHPLVLRQPANSERAYLNGGVDEEAEAEDGIKVIRPVAMSGQATGQQAESGSCSPTREAAGGGTGNGAGEHSNSSSSKFSTANCTISSQSSPDDCDTEAATPASTSSNAGAGSVAGAGAVASTKQNNRNHGTGNSIKFPNCISATKSDSIDGGGGSGSGQRPSQTTSGYNSKTSNSSNKSSNSGSGFSAFNSLTQRLSNFSFLSSSEKKGAGYEGSHSTAHRQHRKAMSMLKSYNQHNHTGGHNNHSQSNNSSSSNFGHSSTLDSNAAGAIGSSSTAHSFGSLKLSRSSHHSSLATAAHASGSAAGSGSGVSSFDPMQLIGTPACPRFDECPLLEPLVCKKIAHERLTALIFREDCFLTACQDGFIYTWARPGHATHATQHLSPGQAAAPGGTVI.

The segment at 58 to 132 is disordered; the sequence is SPAQGKLGSD…SAGNNTVEAR (75 aa). 2 stretches are compositionally biased toward low complexity: residues 80-107 and 115-127; these read GANT…AISN and SHSN…AGNN. 4 WD repeats span residues 248–288, 321–362, 363–402, and 470–517; these read IDKT…AATA, TDNC…GIAR, SYFG…VVAR, and ADRN…LRHP. 5 disordered regions span residues 458–483, 554–628, 661–699, 720–739, and 749–775; these read FEGF…FRSD, SGQA…AGSV, SDSI…NSGS, SEKK…RQHR, and NQHN…GHSS. Polar residues-rich tracts occupy residues 555 to 569 and 595 to 606; these read GQAT…SCSP and TANCTISSQSSP. Composition is skewed to low complexity over residues 612–628 and 673–699; these read EAAT…AGSV and GQRP…NSGS. A WD 5 repeat occupies 856 to 893; that stretch reads IAHERLTALIFREDCFLTACQDGFIYTWARPGHATHAT.

As to quaternary structure, component of the Usp12-46 deubiquitylase complex consisting of Usp12-46, Wdr20 and Uaf1; regulatory subunit that, together with Uaf1, stabilizes Usp12-46. The Usp12-46 deubiquitylase complex associates with arr/arrow; the interaction leads to deubiquitination and stabilization of arr/arrow.

In terms of biological role, regulatory component of the Usp12-46 deubiquitylase complex. This complex deubiquitylates the wg/wingless-signaling receptor arr/arrow, which stabilizes the receptor and increases its concentration at the cell surface; this enhances the sensitivity of cells to wg/wingless-signal stimulation. This increases the amplitude and spatial range of the signaling response to the wg/wingless morphogen gradient, facilitating the precise concentration-dependent regulation of its target genes. Required for wg/wingless-mediated signaling in the wing imaginal disc and for wg/wingless-dependent regulation of intestinal stem cell proliferation. The protein is WD repeat-containing protein 20 homolog of Drosophila melanogaster (Fruit fly).